We begin with the raw amino-acid sequence, 89 residues long: Small ribosomal subunit protein uS19 (89 aa).

It belongs to the universal ribosomal protein uS19 family.

Its function is as follows. Protein S19 forms a complex with S13 that binds strongly to the 16S ribosomal RNA. The protein is Small ribosomal subunit protein uS19 of Parabacteroides distasonis (strain ATCC 8503 / DSM 20701 / CIP 104284 / JCM 5825 / NCTC 11152).